Consider the following 150-residue polypeptide: MNNKVGIVHSLKDGQKYMDIWPMRKELNPLFPEQRVIKATRFAIKVMPAVAAISVLTQMVFANTQAMPQAIVVALFAMSLPLQGIWWLGHRANTQLPPALASWYRELYMKIVETGFALEPIKSKPRYKELAQVLNRAFRQLDDTALERWF.

2 helical membrane-spanning segments follow: residues 42-62 and 70-90; these read FAIK…MVFA and AIVV…WLGH.

It belongs to the UPF0208 family.

The protein localises to the cell inner membrane. This Vibrio cholerae serotype O1 (strain ATCC 39315 / El Tor Inaba N16961) protein is UPF0208 membrane protein VC_1099.